The sequence spans 159 residues: Transcriptional repressor NrdR (159 aa).

Residues 3 to 34 (CPFCRHDDTQVVDSRVSEDGAAIRRRRRCSAC) fold into a zinc finger. The 91-residue stretch at 49-139 (PAVVKKDGSR…VYRRFEDVSE (91 aa)) folds into the ATP-cone domain.

Belongs to the NrdR family. It depends on Zn(2+) as a cofactor.

Its function is as follows. Negatively regulates transcription of bacterial ribonucleotide reductase nrd genes and operons by binding to NrdR-boxes. This is Transcriptional repressor NrdR from Burkholderia cenocepacia (strain HI2424).